Consider the following 316-residue polypeptide: tRNA-cytidine(32) 2-sulfurtransferase (316 aa).

Residues 52–57 (SGGKDS) carry the PP-loop motif motif. 3 residues coordinate [4Fe-4S] cluster: Cys-127, Cys-130, and Cys-218.

Belongs to the TtcA family. As to quaternary structure, homodimer. Mg(2+) is required as a cofactor. [4Fe-4S] cluster serves as cofactor.

The protein localises to the cytoplasm. The enzyme catalyses cytidine(32) in tRNA + S-sulfanyl-L-cysteinyl-[cysteine desulfurase] + AH2 + ATP = 2-thiocytidine(32) in tRNA + L-cysteinyl-[cysteine desulfurase] + A + AMP + diphosphate + H(+). The protein operates within tRNA modification. Its function is as follows. Catalyzes the ATP-dependent 2-thiolation of cytidine in position 32 of tRNA, to form 2-thiocytidine (s(2)C32). The sulfur atoms are provided by the cysteine/cysteine desulfurase (IscS) system. The protein is tRNA-cytidine(32) 2-sulfurtransferase of Haemophilus ducreyi (strain 35000HP / ATCC 700724).